Here is a 322-residue protein sequence, read N- to C-terminus: Picrinine-N-methytransferase (322 aa).

An SAM motif I region spans residues 103 to 112 (MLDVGCGLGG). The interval 166–174 (GTFDLVFTI) is SAM motif II. The tract at residues 193-202 (VAAPGAPVVI) is SAM motif III.

It belongs to the class I-like SAM-binding methyltransferase superfamily. gTMT family. Homodimer. As to expression, accumulates in tissues actively synthesizing monoterpenoid indole alkaloids (MIAs) (at protein level). Mainly expressed in young leaves, but barely in roots and stems.

The protein localises to the cytoplasm. Its subcellular location is the cytosol. It carries out the reaction picrinine + S-adenosyl-L-methionine = ervincine + S-adenosyl-L-homocysteine + H(+). It participates in alkaloid biosynthesis; vindoline biosynthesis. Functionally, S-adenosyl-L-methionine-dependent N-methyltransferase involved in the biosynthesis of biologically active monoterpenoid indole alkaloids (MIAs) natural products including vindoline. Catalyzes the conversion of picrinine to N-methylpicrinine (ervincine). Also accepts, with low efficiency, 21-hydroxycyclolochnericine and norajmaline as substrates. The polypeptide is Picrinine-N-methytransferase (Vinca minor (Common periwinkle)).